An 87-amino-acid polypeptide reads, in one-letter code: Small ribosomal subunit protein uS17 (87 aa).

The protein belongs to the universal ribosomal protein uS17 family. As to quaternary structure, part of the 30S ribosomal subunit.

In terms of biological role, one of the primary rRNA binding proteins, it binds specifically to the 5'-end of 16S ribosomal RNA. This is Small ribosomal subunit protein uS17 from Bacillus velezensis (strain DSM 23117 / BGSC 10A6 / LMG 26770 / FZB42) (Bacillus amyloliquefaciens subsp. plantarum).